Reading from the N-terminus, the 369-residue chain is Choline-phosphate cytidylyltransferase B (369 aa).

The segment at 1–27 (MPVLTTDAESETGIPKSLSNEPPSETM) is disordered. CTP is bound by residues I84, F85, H92, and K122. Phosphocholine-binding residues include K122 and W151. CTP-binding residues include H168, D169, Y173, Q195, R196, T197, and I200. The disordered stretch occupies residues 309 to 369 (RMLQALSPKQ…SMSEGDEDEK (61 aa)). 7 positions are modified to phosphoserine: S315, S319, S322, S323, S329, S331, and S335. Residues 319 to 339 (SPVSSPTRSRSPSRSPSPTFS) show a composition bias toward low complexity. T345 carries the post-translational modification Phosphothreonine. S346, S349, S350, S355, S360, and S362 each carry phosphoserine. Positions 351–362 (PKAASASISSMS) are enriched in low complexity.

The protein belongs to the cytidylyltransferase family. As to quaternary structure, homodimer. In terms of tissue distribution, highly expressed in brain (at protein level). Expressed in liver (at protein level). Expressed at lower levels in lung and gonads. Expressed in brain (at protein level). Expressed at lower levels in lung and gonads.

The protein localises to the endoplasmic reticulum. The protein resides in the cytoplasm. It carries out the reaction phosphocholine + CTP + H(+) = CDP-choline + diphosphate. It functions in the pathway phospholipid metabolism; phosphatidylcholine biosynthesis; phosphatidylcholine from phosphocholine: step 1/2. Functionally, catalyzes the key rate-limiting step in the CDP-choline pathway for phosphatidylcholine biosynthesis. Plays an important role in ovary maturation and the maintenance of sperm production. Catalyzes the key rate-limiting step in the CDP-choline pathway for phosphatidylcholine biosynthesis. This is Choline-phosphate cytidylyltransferase B (Pcyt1b) from Mus musculus (Mouse).